The primary structure comprises 102 residues: Transposable element activator uncharacterized 12 kDa protein (102 aa).

Residues 24-51 (HNHNQNHNHSHNLNPKKKHHRRGQRSAH) are compositionally biased toward basic residues. The disordered stretch occupies residues 24–55 (HNHNQNHNHSHNLNPKKKHHRRGQRSAHRMYG).

The chain is Transposable element activator uncharacterized 12 kDa protein from Zea mays (Maize).